A 218-amino-acid chain; its full sequence is Thiamine-phosphate synthase (218 aa).

4-amino-2-methyl-5-(diphosphooxymethyl)pyrimidine is bound by residues 45-49 (QYREK) and Asn-77. Residues Asp-78 and Asp-97 each coordinate Mg(2+). Residue Ser-116 participates in 4-amino-2-methyl-5-(diphosphooxymethyl)pyrimidine binding. 142 to 144 (TKT) is a 2-[(2R,5Z)-2-carboxy-4-methylthiazol-5(2H)-ylidene]ethyl phosphate binding site. Lys-145 lines the 4-amino-2-methyl-5-(diphosphooxymethyl)pyrimidine pocket. Residues Gly-173 and 193-194 (VT) each bind 2-[(2R,5Z)-2-carboxy-4-methylthiazol-5(2H)-ylidene]ethyl phosphate.

It belongs to the thiamine-phosphate synthase family. Requires Mg(2+) as cofactor.

The enzyme catalyses 2-[(2R,5Z)-2-carboxy-4-methylthiazol-5(2H)-ylidene]ethyl phosphate + 4-amino-2-methyl-5-(diphosphooxymethyl)pyrimidine + 2 H(+) = thiamine phosphate + CO2 + diphosphate. The catalysed reaction is 2-(2-carboxy-4-methylthiazol-5-yl)ethyl phosphate + 4-amino-2-methyl-5-(diphosphooxymethyl)pyrimidine + 2 H(+) = thiamine phosphate + CO2 + diphosphate. It carries out the reaction 4-methyl-5-(2-phosphooxyethyl)-thiazole + 4-amino-2-methyl-5-(diphosphooxymethyl)pyrimidine + H(+) = thiamine phosphate + diphosphate. It functions in the pathway cofactor biosynthesis; thiamine diphosphate biosynthesis; thiamine phosphate from 4-amino-2-methyl-5-diphosphomethylpyrimidine and 4-methyl-5-(2-phosphoethyl)-thiazole: step 1/1. Functionally, condenses 4-methyl-5-(beta-hydroxyethyl)thiazole monophosphate (THZ-P) and 2-methyl-4-amino-5-hydroxymethyl pyrimidine pyrophosphate (HMP-PP) to form thiamine monophosphate (TMP). The sequence is that of Thiamine-phosphate synthase from Pelotomaculum thermopropionicum (strain DSM 13744 / JCM 10971 / SI).